A 161-amino-acid polypeptide reads, in one-letter code: MPSFDTVCEANLVEVKNAVENSAKEIGTRFDFKGTSAAIEIKDKEITLFGDAEFQLQQVEDILRNKLTKRNVDVRFLDKGDVQKIGGDKVKQVIKVRNGIESELAKKIQKLVKESKIKVQAAIQEEKVRVTGAKRDDLQAVMALIRKDITDVPLSFDNFRD.

It belongs to the YajQ family.

Its function is as follows. Nucleotide-binding protein. This Paracidovorax citrulli (strain AAC00-1) (Acidovorax citrulli) protein is Nucleotide-binding protein Aave_1854.